The chain runs to 158 residues: Low molecular weight phosphotyrosine protein phosphatase (158 aa).

An N-acetylalanine modification is found at A2. C13 acts as the Nucleophile in catalysis. The active site involves R19. D130 acts as the Proton donor in catalysis. Y132 and Y133 each carry phosphotyrosine.

It belongs to the low molecular weight phosphotyrosine protein phosphatase family. Interacts with EPHA2; dephosphorylates EPHA2. Interacts with EPHB1. As to quaternary structure, interacts with the SH3 domain of SPTAN1. There is no interaction observed for isoforms 2 or 3. Post-translationally, phosphorylated by LCK. Phosphorylation at Tyr-132 increases its phosphatase activity. In terms of processing, not phosphorylated. As to expression, expressed in T-lymphocytes.

The protein localises to the cytoplasm. It carries out the reaction O-phospho-L-tyrosyl-[protein] + H2O = L-tyrosyl-[protein] + phosphate. It catalyses the reaction a phosphate monoester + H2O = an alcohol + phosphate. With respect to regulation, inhibited by sulfhydryl reagents. In terms of biological role, acts on tyrosine phosphorylated proteins, low-MW aryl phosphates and natural and synthetic acyl phosphates with differences in substrate specificity between isoform 1 and isoform 2. Does not possess phosphatase activity. The chain is Low molecular weight phosphotyrosine protein phosphatase from Homo sapiens (Human).